A 425-amino-acid chain; its full sequence is CinA-like protein (425 aa).

It belongs to the CinA family.

This chain is CinA-like protein, found in Shewanella sp. (strain ANA-3).